Consider the following 630-residue polypeptide: Transposase B from transposon PsiTn554 (630 aa).

Positions 216 to 302 (TYFKQLVKRY…ILEGLFSTLH (87 aa)) constitute a Core-binding (CB) domain. Residues 326 to 513 (AKPRFIDEFV…FDETLKNEFT (188 aa)) form the Tyr recombinase domain. Catalysis depends on residues arginine 363, lysine 391, histidine 465, arginine 468, and histidine 491. Tyrosine 500 functions as the O-(3'-phospho-DNA)-tyrosine intermediate in the catalytic mechanism.

It belongs to the 'phage' integrase family.

The chain is Transposase B from transposon PsiTn554 (tnpB) from Staphylococcus aureus.